The chain runs to 335 residues: NADH-quinone oxidoreductase subunit H (335 aa).

A run of 8 helical transmembrane segments spans residues 11-31, 81-101, 114-134, 154-174, 187-207, 238-258, 270-290, and 307-327; these read VILT…AGAL, VIFT…FAII, IGLL…LFAG, VSYE…VGSF, LWFI…GVAV, FFVG…TLFF, QLSF…FILL, and WKFC…IVLW.

This sequence belongs to the complex I subunit 1 family. NDH-1 is composed of 13 different subunits. Subunits NuoA, H, J, K, L, M, N constitute the membrane sector of the complex.

The protein resides in the cell inner membrane. It catalyses the reaction a quinone + NADH + 5 H(+)(in) = a quinol + NAD(+) + 4 H(+)(out). In terms of biological role, NDH-1 shuttles electrons from NADH, via FMN and iron-sulfur (Fe-S) centers, to quinones in the respiratory chain. The immediate electron acceptor for the enzyme in this species is believed to be ubiquinone. Couples the redox reaction to proton translocation (for every two electrons transferred, four hydrogen ions are translocated across the cytoplasmic membrane), and thus conserves the redox energy in a proton gradient. This subunit may bind ubiquinone. This is NADH-quinone oxidoreductase subunit H from Pseudomonas fluorescens (strain Pf0-1).